The sequence spans 65 residues: Beta-mammal toxin Tpa2 (65 aa).

Residues 2–64 enclose the LCN-type CS-alpha/beta domain; that stretch reads KEGYLVGNDG…TWSRATNRCG (63 aa). Disulfide bonds link cysteine 12/cysteine 63, cysteine 16/cysteine 38, cysteine 24/cysteine 44, and cysteine 28/cysteine 46.

Expressed by the venom gland.

The protein localises to the secreted. Functionally, beta toxins bind voltage-independently at site-4 of sodium channels (Nav) and shift the voltage of activation toward more negative potentials thereby affecting sodium channel activation and promoting spontaneous and repetitive firing. This toxin is lethal to mice. The chain is Beta-mammal toxin Tpa2 from Tityus pachyurus (Colombian scorpion).